Here is a 417-residue protein sequence, read N- to C-terminus: NADH-quinone oxidoreductase subunit D (417 aa).

This sequence belongs to the complex I 49 kDa subunit family. NDH-1 is composed of 14 different subunits. Subunits NuoB, C, D, E, F, and G constitute the peripheral sector of the complex.

It is found in the cell inner membrane. The enzyme catalyses a quinone + NADH + 5 H(+)(in) = a quinol + NAD(+) + 4 H(+)(out). Functionally, NDH-1 shuttles electrons from NADH, via FMN and iron-sulfur (Fe-S) centers, to quinones in the respiratory chain. The immediate electron acceptor for the enzyme in this species is believed to be ubiquinone. Couples the redox reaction to proton translocation (for every two electrons transferred, four hydrogen ions are translocated across the cytoplasmic membrane), and thus conserves the redox energy in a proton gradient. The chain is NADH-quinone oxidoreductase subunit D from Legionella pneumophila subsp. pneumophila (strain Philadelphia 1 / ATCC 33152 / DSM 7513).